The chain runs to 508 residues: MGLPWYRVHTVVLNDPGRLLAVHIMHTALVAGWAGSMALYELAVFDPSDPVLDPMWRQGMFVIPFMTRLGITNSWGGWSITGGTVTNPGIWSYEGVAGSHILFSGLCFLAAIWHWVYWDLAIFSDERTGKPSLDLPKIFGIHLFLSGLACFGFGAFHVTGLYGPGIWVSDPYGLTGEVQPVNPAWGVEGFDPFVPGGIASHHIAAGTLGILAGLFHLSVRPPQRLYKGLRMGNIETVLSSSIAAVFFAAFVVAGTMWYGSATTPIELFGPTRYQWDQGYFQQEIYRRVGAGLAKNQSLSEAWSKIPEKLAFYDYIGNNPAKGGLFRAGSMDSGDGIAVGWLGHPIFRDKEGRELFVRRMPTFFETFPVVLVDGDGIVRADVPFRRAESKYSVEQVGVTVEFYGGELNGVSYSDPATVKKYARRAQLGEIFELDRATLKSDGVFRSSPRGWFTFGHASFALLFFFGHIWHGARTLFRDVFAGIDPDLDTQVEFGAFQKLGDPTTRRQAV.

The next 6 helical transmembrane spans lie at 21–36, 101–115, 140–156, 203–218, 237–252, and 457–472; these read AVHIMHTALVAGWAGS, ILFSGLCFLAAIWHW, GIHLFLSGLACFGFGAF, IAAGTLGILAGLFHLS, VLSSSIAAVFFAAFVV, and SFALLFFFGHIWHGAR.

This sequence belongs to the PsbB/PsbC family. PsbB subfamily. In terms of assembly, PSII is composed of 1 copy each of membrane proteins PsbA, PsbB, PsbC, PsbD, PsbE, PsbF, PsbH, PsbI, PsbJ, PsbK, PsbL, PsbM, PsbT, PsbX, PsbY, PsbZ, Psb30/Ycf12, at least 3 peripheral proteins of the oxygen-evolving complex and a large number of cofactors. It forms dimeric complexes. The cofactor is Binds multiple chlorophylls. PSII binds additional chlorophylls, carotenoids and specific lipids..

The protein localises to the plastid. It localises to the chloroplast thylakoid membrane. Functionally, one of the components of the core complex of photosystem II (PSII). It binds chlorophyll and helps catalyze the primary light-induced photochemical processes of PSII. PSII is a light-driven water:plastoquinone oxidoreductase, using light energy to abstract electrons from H(2)O, generating O(2) and a proton gradient subsequently used for ATP formation. The protein is Photosystem II CP47 reaction center protein of Oenothera argillicola (Appalachian evening primrose).